Reading from the N-terminus, the 282-residue chain is Formamidopyrimidine-DNA glycosylase (282 aa).

Proline 2 functions as the Schiff-base intermediate with DNA in the catalytic mechanism. The Proton donor role is filled by glutamate 3. Lysine 61 acts as the Proton donor; for beta-elimination activity in catalysis. Histidine 93, arginine 112, and lysine 158 together coordinate DNA. The FPG-type zinc finger occupies 244-278; it reads DAYGREGEPCRRCGAIMRRDKFMNRSSFYCPRCQP. Arginine 268 serves as the catalytic Proton donor; for delta-elimination activity.

It belongs to the FPG family. In terms of assembly, monomer. Requires Zn(2+) as cofactor.

It catalyses the reaction Hydrolysis of DNA containing ring-opened 7-methylguanine residues, releasing 2,6-diamino-4-hydroxy-5-(N-methyl)formamidopyrimidine.. The enzyme catalyses 2'-deoxyribonucleotide-(2'-deoxyribose 5'-phosphate)-2'-deoxyribonucleotide-DNA = a 3'-end 2'-deoxyribonucleotide-(2,3-dehydro-2,3-deoxyribose 5'-phosphate)-DNA + a 5'-end 5'-phospho-2'-deoxyribonucleoside-DNA + H(+). In terms of biological role, involved in base excision repair of DNA damaged by oxidation or by mutagenic agents. Acts as a DNA glycosylase that recognizes and removes damaged bases. Has a preference for oxidized purines, such as 7,8-dihydro-8-oxoguanine (8-oxoG). Has AP (apurinic/apyrimidinic) lyase activity and introduces nicks in the DNA strand. Cleaves the DNA backbone by beta-delta elimination to generate a single-strand break at the site of the removed base with both 3'- and 5'-phosphates. The sequence is that of Formamidopyrimidine-DNA glycosylase from Mycolicibacterium gilvum (strain PYR-GCK) (Mycobacterium gilvum (strain PYR-GCK)).